A 447-amino-acid polypeptide reads, in one-letter code: Ribosomal protein uS12 methylthiotransferase RimO (447 aa).

The 111-residue stretch at 4-114 (PKVGFVSLGC…VMEAVHEYVP (111 aa)) folds into the MTTase N-terminal domain. [4Fe-4S] cluster is bound by residues Cys13, Cys49, Cys78, Cys147, Cys151, and Cys154. One can recognise a Radical SAM core domain in the interval 133–370 (LTPKHYAYLK…MQVQQEISAA (238 aa)). A TRAM domain is found at 373–443 (QKRIGQTMTV…EYDLFAKLIQ (71 aa)).

This sequence belongs to the methylthiotransferase family. RimO subfamily. The cofactor is [4Fe-4S] cluster.

It is found in the cytoplasm. It carries out the reaction L-aspartate(89)-[ribosomal protein uS12]-hydrogen + (sulfur carrier)-SH + AH2 + 2 S-adenosyl-L-methionine = 3-methylsulfanyl-L-aspartate(89)-[ribosomal protein uS12]-hydrogen + (sulfur carrier)-H + 5'-deoxyadenosine + L-methionine + A + S-adenosyl-L-homocysteine + 2 H(+). In terms of biological role, catalyzes the methylthiolation of an aspartic acid residue of ribosomal protein uS12. This Acinetobacter baylyi (strain ATCC 33305 / BD413 / ADP1) protein is Ribosomal protein uS12 methylthiotransferase RimO.